The following is a 179-amino-acid chain: Interferon lambda-4 (179 aa).

Positions 1–21 (MRPSVWAAVAAGLWVLCTVIA) are cleaved as a signal peptide. The tract at residues 130–149 (SSRKVPGAQKRRHKPRRADS) is disordered.

This sequence belongs to the lambda interferon family.

It localises to the cytoplasm. The protein localises to the secreted. Cytokine that may trigger an antiviral response activating the JAK-STAT pathway and up-regulating specifically some interferon-stimulated genes. In Homo sapiens (Human), this protein is Interferon lambda-4 (IFNL4).